The following is a 179-amino-acid chain: Large ribosomal subunit protein uL5 (179 aa).

The protein belongs to the universal ribosomal protein uL5 family. As to quaternary structure, part of the 50S ribosomal subunit; part of the 5S rRNA/L5/L18/L25 subcomplex. Contacts the 5S rRNA and the P site tRNA. Forms a bridge to the 30S subunit in the 70S ribosome.

Its function is as follows. This is one of the proteins that bind and probably mediate the attachment of the 5S RNA into the large ribosomal subunit, where it forms part of the central protuberance. In the 70S ribosome it contacts protein S13 of the 30S subunit (bridge B1b), connecting the 2 subunits; this bridge is implicated in subunit movement. Contacts the P site tRNA; the 5S rRNA and some of its associated proteins might help stabilize positioning of ribosome-bound tRNAs. This Solidesulfovibrio magneticus (strain ATCC 700980 / DSM 13731 / RS-1) (Desulfovibrio magneticus) protein is Large ribosomal subunit protein uL5.